Reading from the N-terminus, the 462-residue chain is ATP synthase subunit beta (462 aa).

ATP is bound at residue 152 to 159 (GGAGVGKT).

It belongs to the ATPase alpha/beta chains family. As to quaternary structure, F-type ATPases have 2 components, CF(1) - the catalytic core - and CF(0) - the membrane proton channel. CF(1) has five subunits: alpha(3), beta(3), gamma(1), delta(1), epsilon(1). CF(0) has three main subunits: a(1), b(2) and c(9-12). The alpha and beta chains form an alternating ring which encloses part of the gamma chain. CF(1) is attached to CF(0) by a central stalk formed by the gamma and epsilon chains, while a peripheral stalk is formed by the delta and b chains.

It localises to the cell inner membrane. It catalyses the reaction ATP + H2O + 4 H(+)(in) = ADP + phosphate + 5 H(+)(out). In terms of biological role, produces ATP from ADP in the presence of a proton gradient across the membrane. The catalytic sites are hosted primarily by the beta subunits. This Shewanella amazonensis (strain ATCC BAA-1098 / SB2B) protein is ATP synthase subunit beta.